A 323-amino-acid chain; its full sequence is MPGDKQEAKNATQKTEEGVHITEALITKRNLTFPEDEDLSEKMFHTLDDLETVRLDGEGITCIGNLERLRNIHSLYLQSNKIQRIENLACITSLRFLSLAGNQIRHVENLLDLQYLQFLDLSENLIETLKLDELPQSLLILNLCGNPCTNQDGYRKMVIGALPLLLDLDKQPILERWTSDEEDKSSDEEEEFPELNGPFCAERGFFKDLEQELHQHQERRQQAALTEHLSRMETQPVLTDLPLLPAVPMAGDCSPAVTEEPGKEAAPKATSSTQMASSSKKQVPRNQKGSVQARKGALAATASKTSLAAAPSMTKSTNKRGTK.

LRR repeat units lie at residues 49–70 (DLET…ERLR), 71–92 (NIHS…ACIT), 93–114 (SLRF…LDLQ), and 115–135 (YLQF…DELP). Residues 146–188 (NPCTNQDGYRKMVIGALPLLLDLDKQPILERWTSDEEDKSSDE) form the LRRCT domain. The residue at position 178 (threonine 178) is a Phosphothreonine. Phosphoserine occurs at positions 179, 185, and 186. Residues 203–228 (RGFFKDLEQELHQHQERRQQAALTEH) adopt a coiled-coil conformation. Positions 252 to 323 (DCSPAVTEEP…TKSTNKRGTK (72 aa)) are disordered. Polar residues predominate over residues 269–290 (ATSSTQMASSSKKQVPRNQKGS). The span at 297-310 (ALAATASKTSLAAA) shows a compositional bias: low complexity. Serine 303 carries the phosphoserine modification.

The protein localises to the cell projection. It localises to the cilium. It is found in the flagellum. Functionally, required for normal spermatogenesis and male fertility. Plays an important role in sperm flagellum biogenesis. The chain is Leucine-rich repeat-containing protein 46 (Lrrc46) from Rattus norvegicus (Rat).